Reading from the N-terminus, the 110-residue chain is ATP-dependent Clp protease adapter protein ClpS (110 aa).

Residues 1-10 (MSDDRRRGDE) show a composition bias toward basic and acidic residues. The interval 1–27 (MSDDRRRGDEDGGAGTGVITKTKPKTK) is disordered.

The protein belongs to the ClpS family. As to quaternary structure, binds to the N-terminal domain of the chaperone ClpA.

Functionally, involved in the modulation of the specificity of the ClpAP-mediated ATP-dependent protein degradation. This chain is ATP-dependent Clp protease adapter protein ClpS, found in Parvibaculum lavamentivorans (strain DS-1 / DSM 13023 / NCIMB 13966).